Consider the following 1033-residue polypeptide: Lethal(2) giant larvae protein homolog SRO7 (1033 aa).

Residues 16–45 (SLKGQNSETPIENSKASFKSKNSKTSTISK) are disordered. Over residues 18-27 (KGQNSETPIE) the composition is skewed to polar residues. A compositionally biased stretch (low complexity) spans 28–45 (NSKASFKSKNSKTSTISK). WD repeat units lie at residues 81 to 114 (IAAA…VVIK), 121 to 156 (IKEM…TTVF), 161 to 197 (ITSI…SFKL), 216 to 249 (SIQW…KQSF), 274 to 309 (VIQS…IMAR), 333 to 397 (KISK…MKIF), 405 to 440 (IVNI…ETML), 464 to 538 (ATTS…FEVN), 552 to 631 (DKIS…STAV), 638 to 673 (TSAI…YMEN), 685 to 736 (VTCI…DITN), 745 to 799 (KIDA…THKG), 804 to 851 (LAAT…MSEH), and 865 to 888 (SVLR…STVK). A phosphoserine mark is found at serine 591 and serine 602. The segment at 953–984 (SFSERSSDDNNANHPEHQYTKPTRKGRNSSYG) is disordered.

This sequence belongs to the WD repeat L(2)GL family. In terms of assembly, interacts with MYO2 and SEC9.

Its subcellular location is the cytoplasm. The protein resides in the cell membrane. In terms of biological role, acts as an allosteric regulator of polarized exocytosis by promoting the targeted fusion of vesicles with the plasma membrane. Coordinates the spatial and temporal nature of both Rab-dependent tethering and SNARE-dependent membrane fusion of exocytic vesicles with the plasma membrane. Required for targeting of the sodium pumping ATPase ENA1 to the Cell Surface, thus being involved in maintenance of ion homeostasis in cells exposed to NaCl stress. May be involved in the targeting of the myosin proteins to their intrinsic pathways. Multicopy suppressor of RHO3. May also participate in the maintenance of cell polarity and bud growth. The polypeptide is Lethal(2) giant larvae protein homolog SRO7 (SRO7) (Saccharomyces cerevisiae (strain ATCC 204508 / S288c) (Baker's yeast)).